The sequence spans 420 residues: Phosphoribosylamine--glycine ligase (420 aa).

An ATP-grasp domain is found at 108 to 314; sequence KQFMEKYAIP…FAALIDALLH (207 aa). 134–195 lines the ATP pocket; sequence LDERGVPIVI…EDFLAGEEFS (62 aa). 2 residues coordinate Mg(2+): Glu-284 and Asn-286.

It belongs to the GARS family. Mg(2+) is required as a cofactor. It depends on Mn(2+) as a cofactor.

The catalysed reaction is 5-phospho-beta-D-ribosylamine + glycine + ATP = N(1)-(5-phospho-beta-D-ribosyl)glycinamide + ADP + phosphate + H(+). Its pathway is purine metabolism; IMP biosynthesis via de novo pathway; N(1)-(5-phospho-D-ribosyl)glycinamide from 5-phospho-alpha-D-ribose 1-diphosphate: step 2/2. The sequence is that of Phosphoribosylamine--glycine ligase from Listeria monocytogenes serotype 4b (strain F2365).